A 603-amino-acid polypeptide reads, in one-letter code: Probable potassium transport system protein Kup (603 aa).

The next 12 helical transmembrane spans lie at 15–35 (GLVF…IFLL), 43–63 (VIGV…VEYA), 94–114 (AAFI…DGVI), 136–156 (IGQG…FSVQ), 163–183 (ITWV…FSGI), 201–221 (AISF…EVIL), 244–264 (AWRL…AFII), 284–304 (IYIP…QAMI), 336–356 (IYIG…IFEF), 367–387 (GLAV…IFYL), 391–411 (MFRS…LLSN), and 415–435 (IPHG…LIII).

This sequence belongs to the HAK/KUP transporter (TC 2.A.72) family.

It is found in the cell membrane. The catalysed reaction is K(+)(in) + H(+)(in) = K(+)(out) + H(+)(out). In terms of biological role, transport of potassium into the cell. Likely operates as a K(+):H(+) symporter. This is Probable potassium transport system protein Kup from Methanosarcina acetivorans (strain ATCC 35395 / DSM 2834 / JCM 12185 / C2A).